A 109-amino-acid chain; its full sequence is Synaptobrevin-1 (109 aa).

The tract at residues 1–26 is disordered; the sequence is MDAQGDAGAQGGSQGGPRPSNKRLQQ. Over 1-86 the chain is Cytoplasmic; it reads MDAQGDAGAQ…KRKYWWKNIK (86 aa). The 61-residue stretch at 23–83 folds into the v-SNARE coiled-coil homology domain; that stretch reads RLQQTQAQVD…ATLKRKYWWK (61 aa). Residues 87–107 form a helical; Anchor for type IV membrane protein membrane-spanning segment; the sequence is MMIIMCAIVVILIIIIVLWAG. Residues 108-109 lie on the Extracellular side of the membrane; the sequence is GK.

This sequence belongs to the synaptobrevin family. In terms of assembly, part of the SNARE core complex containing ric-4/SNAP25, snb-1/VAMP2 and unc-64/STX1A. This complex binds to cpx-1/CPLX1. As to expression, expressed in the nervous system notably the nerve ring, ventral cord and dorsal cord.

It is found in the cytoplasmic vesicle. It localises to the secretory vesicle. The protein localises to the synaptic vesicle membrane. Its subcellular location is the cell membrane. The protein resides in the synapse. It is found in the synaptosome. Its function is as follows. Involved in the targeting and/or fusion of transport vesicles to their target membrane. Acts in neuronal exocytosis of synaptic transmission. Likely to have a role in cholinergic transmisson. Required for viability, coordinated movement and M3 pharynx motor neuron function. The protein is Synaptobrevin-1 of Caenorhabditis elegans.